The primary structure comprises 133 residues: Salivary cystatin-L2 (133 aa).

Positions 1 to 18 are cleaved as a signal peptide; it reads MTSSLALVLLLGGAAVCA. The region spanning 34 to 118 is the Cystatin domain; the sequence is DDPKYLELAH…RTCTAVIYEN (85 aa).

The protein belongs to the cystatin family. In terms of tissue distribution, salivary gland, midgut and other tissues.

It is found in the secreted. Inhibitor of cysteine proteinases. Inhibits host cathepsin L (CTSL) and S (CTSS). Modulates production of various cytokines and chemokines in lipopolysaccharide (LPS)-stimulated mouse dendritic cell. Suppresses maturation of mouse bone-marrow-derived dendritic cells (BMDCs). In terms of biological role, (Microbial infection) Modulates Borrelia miyamotoi-stimulated immune responses in mice by suppressing activities of host dendritic and T-cells. The polypeptide is Salivary cystatin-L2 (Ixodes persulcatus (Taiga tick)).